Reading from the N-terminus, the 220-residue chain is Cytidylate kinase (220 aa).

Residue 11 to 19 (GPTASGKGT) coordinates ATP.

The protein belongs to the cytidylate kinase family. Type 1 subfamily.

Its subcellular location is the cytoplasm. It carries out the reaction CMP + ATP = CDP + ADP. The catalysed reaction is dCMP + ATP = dCDP + ADP. The chain is Cytidylate kinase from Polynucleobacter asymbioticus (strain DSM 18221 / CIP 109841 / QLW-P1DMWA-1) (Polynucleobacter necessarius subsp. asymbioticus).